Reading from the N-terminus, the 225-residue chain is Urease accessory protein UreG (225 aa).

Residues 1 to 21 are disordered; sequence MHLDHHHESAAAVSADARRPD. Residue 33 to 40 coordinates GTP; it reads GPVGSGKT.

Belongs to the SIMIBI class G3E GTPase family. UreG subfamily. As to quaternary structure, homodimer. UreD, UreF and UreG form a complex that acts as a GTP-hydrolysis-dependent molecular chaperone, activating the urease apoprotein by helping to assemble the nickel containing metallocenter of UreC. The UreE protein probably delivers the nickel.

It localises to the cytoplasm. Functionally, facilitates the functional incorporation of the urease nickel metallocenter. This process requires GTP hydrolysis, probably effectuated by UreG. This Streptomyces coelicolor (strain ATCC BAA-471 / A3(2) / M145) protein is Urease accessory protein UreG.